A 307-amino-acid chain; its full sequence is 4-hydroxythreonine-4-phosphate dehydrogenase (307 aa).

H126 and T127 together coordinate substrate. H156, H195, and H251 together coordinate a divalent metal cation. Substrate is bound by residues K259, N268, and R277.

The protein belongs to the PdxA family. Homodimer. Requires Zn(2+) as cofactor. Mg(2+) is required as a cofactor. It depends on Co(2+) as a cofactor.

It localises to the cytoplasm. The catalysed reaction is 4-(phosphooxy)-L-threonine + NAD(+) = 3-amino-2-oxopropyl phosphate + CO2 + NADH. It functions in the pathway cofactor biosynthesis; pyridoxine 5'-phosphate biosynthesis; pyridoxine 5'-phosphate from D-erythrose 4-phosphate: step 4/5. In terms of biological role, catalyzes the NAD(P)-dependent oxidation of 4-(phosphooxy)-L-threonine (HTP) into 2-amino-3-oxo-4-(phosphooxy)butyric acid which spontaneously decarboxylates to form 3-amino-2-oxopropyl phosphate (AHAP). In Helicobacter pylori (strain HPAG1), this protein is 4-hydroxythreonine-4-phosphate dehydrogenase.